The primary structure comprises 34 residues: Potassium channel toxin alpha-KTx 6.17 (34 aa).

4 disulfides stabilise this stretch: cysteine 3-cysteine 24, cysteine 9-cysteine 29, cysteine 13-cysteine 31, and cysteine 19-cysteine 34.

Belongs to the short scorpion toxin superfamily. Potassium channel inhibitor family. Alpha-KTx 06 subfamily. Expressed by the venom gland.

The protein resides in the secreted. Functionally, this toxin reversibly blocks Shaker B potassium-channels (expressed in insect Sf9 cells) with a Kd of 96.6 nM, and presents an even better affinity toward hKv1.3 (KCNA3), blocking it with a Kd of 17.7 nM. The protein is Potassium channel toxin alpha-KTx 6.17 of Opisthacanthus cayaporum (South American scorpion).